A 1099-amino-acid polypeptide reads, in one-letter code: Solute carrier family 12 member 1 (1099 aa).

At M1–F177 the chain is on the cytoplasmic side. Positions R20 to V23 match the RFXV motif motif. Residues S60 and S90 each carry the phosphoserine modification. Residues T94, T99, T104, and T117 each carry the phosphothreonine modification. S119 bears the Phosphoserine mark. S129 carries the phosphoserine; by AMPK modification. S147 carries the post-translational modification Phosphoserine. Residues S147–D169 form a disordered region. Over residues G159–D169 the composition is skewed to basic and acidic residues. Residues G178–I198 form a helical membrane-spanning segment. Residues R199–S201 are Extracellular-facing. Residues W202–V222 traverse the membrane as a helical segment. The Cytoplasmic portion of the chain corresponds to T223 to S259. The chain crosses the membrane as a helical span at residues I260–A280. Residues E281 to R302 lie on the Extracellular side of the membrane. The helical transmembrane segment at I303–E323 threads the bilayer. Residues A324 to Q327 are Cytoplasmic-facing. Residues V328–P348 traverse the membrane as a helical segment. Residues S349 to G379 are Extracellular-facing. A helical membrane pass occupies residues F380–I400. Residues S401–L417 are Cytoplasmic-facing. The helical transmembrane segment at A418–V438 threads the bilayer. At R439–L550 the chain is on the extracellular side. N-linked (GlcNAc...) asparagine glycosylation is found at N446 and N456. Helical transmembrane passes span T551–I571 and S572–A592. Over K593–S609 the chain is Extracellular. Residues L610 to I630 traverse the membrane as a helical segment. At T631–S1099 the chain is on the cytoplasmic side.

The protein belongs to the SLC12A transporter family. In terms of assembly, when phosphorylated, interacts with PPP3CB. Post-translationally, phosphorylated at Ser-90, Thr-99 and Thr-104 by OXSR1/OSR1 and STK39/SPAK downstream of WNK kinases (WNK1, WNK2, WNK3 or WNK4), promoting its activity. As to expression, predominant in kidney. The 3 isoforms are differentially distributed within the kidney: B almost exclusively in cortex, F almost exclusively in medulla, and A about equally distributed.

The protein localises to the apical cell membrane. The catalysed reaction is K(+)(out) + 2 chloride(out) + Na(+)(out) = K(+)(in) + 2 chloride(in) + Na(+)(in). Its activity is regulated as follows. Activated following phosphorylation by OXSR1/OSR1 and STK39/SPAK downstream of WNK kinases (WNK1, WNK2, WNK3 or WNK4). Its function is as follows. Renal sodium, potassium and chloride ion cotransporter that mediates the transepithelial NaCl reabsorption in the thick ascending limb and plays an essential role in the urinary concentration and volume regulation. Electrically silent transporter system. The protein is Solute carrier family 12 member 1 (SLC12A1) of Oryctolagus cuniculus (Rabbit).